Here is a 1530-residue protein sequence, read N- to C-terminus: Neurexin-1 (1530 aa).

The first 30 residues, 1 to 30 (MGTALLQRGGCFLLCLSLLLLGCWAELGSG), serve as a signal peptide directing secretion. The 182-residue stretch at 31–212 (LEFPGAEGQW…KLDDEPPNSG (182 aa)) folds into the Laminin G-like 1 domain. Residues 31–1454 (LEFPGAEGQW…EVIRESSSTT (1424 aa)) lie on the Extracellular side of the membrane. Residues Asn125 and Asn190 are each glycosylated (N-linked (GlcNAc...) asparagine). The disordered stretch occupies residues 199-221 (SGEVKLDDEPPNSGGGSPCEAGE). An EGF-like 1 domain is found at 213–256 (GGSPCEAGEEGEGGVCLNGGVCSVVDDQAVCDCSRTGFRGKDCS). Disulfide bonds link Cys228-Cys243 and Cys245-Cys255. 2 consecutive Laminin G-like domains span residues 299-496 (IATF…AFKC) and 503-695 (DPIT…KPSC). Ca(2+) contacts are provided by Asp345, Leu362, and Met430. 5 disulfides stabilise this stretch: Cys460–Cys496, Cys666–Cys695, Cys703–Cys714, Cys708–Cys723, and Cys725–Cys735. Residues 699–736 (TAKPCLSNPCKNNGMCRDGWNRYVCDCSGTGYLGRSCE) enclose the EGF-like 2 domain. Ser705 carries an O-linked (Glc...) serine glycan. 2 consecutive Laminin G-like domains span residues 741–914 (VLSY…IDYC) and 928–1103 (DPVT…ERGC). Residues Asp788 and Leu805 each contribute to the Ca(2+) site. Asn813 carries an N-linked (GlcNAc...) asparagine glycan. Arg864 contacts Ca(2+). Cystine bridges form between Cys906–Cys914, Cys1075–Cys1103, Cys1110–Cys1121, Cys1115–Cys1130, and Cys1132–Cys1142. An EGF-like 3 domain is found at 1106–1143 (PSTTCQEDSCSNQGVCLQQWDGISCDCSMTSFSGPLCN). In terms of domain architecture, Laminin G-like 6 spans 1149 to 1347 (YIFSKGGGQI…DANIAIVGNV (199 aa)). 2 residues coordinate Ca(2+): Asp1199 and Val1216. An N-linked (GlcNAc...) asparagine glycan is attached at Asn1246. 2 residues coordinate Ca(2+): Ile1298 and Asn1300. An O-linked (Xyl...) (heparan sulfate) serine glycan is attached at Ser1408. The tract at residues 1411-1443 (CPSDDEDIDPCEPSSGGLANPTRAGGREPYPGS) is disordered. The chain crosses the membrane as a helical span at residues 1455–1475 (GMVVGIVAAAALCILILLYAM). Residues 1476 to 1530 (YKYRNRDEGSYHVDESRNYISNSAQSNGAVVKEKQPSSAKSANKNKKNKDKEYYV) lie on the Cytoplasmic side of the membrane. The interval 1497-1523 (NSAQSNGAVVKEKQPSSAKSANKNKKN) is interaction with CASK. The tract at residues 1497–1530 (NSAQSNGAVVKEKQPSSAKSANKNKKNKDKEYYV) is disordered.

The protein belongs to the neurexin family. Interacts (via laminin G-like domain 2 and/or laminin G-like domain 6) with NLGN1 forming a heterotetramer, where one NLGN1 dimer interacts with one NRXN1 dimer. Also interacts (via laminin G-like domain 2 and/or laminin G-like domain 6) with NLGN2, NLGN3 and NLGN4L; interactions with NLGN1, NLGN2, NLGN3 and NLGN4L are calcium-dependent. Interacts (via cytoplasmic C-terminal region) with CASK (via the PDZ, SH3 and guanylate kinase-like domains). Interacts (via cytoplasmic C-terminus) with CASKIN1 and APBA1. Interacts (via laminin G-like domain 2) with NXPH1 and NXPH3. Alpha-type isoforms (neurexin-1-alpha) interact (via laminin G-like domain 2 and/or laminin G-like domain 6) with DAG1 (via alpha-dystroglycan chain). Interacts with LRRTM1, LRRTM2, LRRTM3 and LRRTM4. Interacts with SYT13 and SYTL1. Interacts with CBLN1, CBLN2 and, less avidly, with CBLN4. Interacts with CLSTN3. Alpha-type isoforms interact with alpha-latrotoxin from spider venom. O-glycosylated; contains heparan sulfate. Heparan sulfate attachment is required for synapse development by mediating interactions with neuroligins and LRRTM2.

The protein resides in the presynaptic cell membrane. Functionally, cell surface protein involved in cell-cell-interactions, exocytosis of secretory granules and regulation of signal transmission. Function is isoform-specific. Alpha-type isoforms have a long N-terminus with six laminin G-like domains and play an important role in synaptic signal transmission. Alpha-type isoforms play a role in the regulation of calcium channel activity and Ca(2+)-triggered neurotransmitter release at synapses and at neuromuscular junctions. They play an important role in Ca(2+)-triggered exocytosis of secretory granules in pituitary gland. They may affect their functions at synapses and in endocrine cells via their interactions with proteins from the exocytotic machinery. Likewise, alpha-type isoforms play a role in regulating the activity of postsynaptic NMDA receptors, a subtype of glutamate-gated ion channels. Both alpha-type and beta-type isoforms may play a role in the formation or maintenance of synaptic junctions via their interactions (via the extracellular domains) with neuroligin family members, CBLN1 or CBLN2. In vitro, triggers the de novo formation of presynaptic structures. May be involved in specification of excitatory synapses. Alpha-type isoforms were first identified as receptors for alpha-latrotoxin from spider venom. The protein is Neurexin-1 (NRXN1) of Bos taurus (Bovine).